The primary structure comprises 966 residues: Translation initiation factor IF-2 (966 aa).

Composition is skewed to basic and acidic residues over residues 99-113 (KRDE…EAAD), 123-183 (EQAR…KAEE), 197-212 (DASR…RVAV), 220-249 (AADD…EAEA), and 266-277 (PSERKAEEKKAE). Residues 99 to 382 (KRDEAGADQH…NFQAPTEPVV (284 aa)) form a disordered region. Residues 304–315 (AATTTTTTATTT) show a composition bias toward low complexity. Gly residues predominate over residues 346 to 359 (SSGGVGGWRGGPRG). The tr-type G domain occupies 466 to 635 (PRPPVVTVMG…LLQAEVLELK (170 aa)). The tract at residues 475–482 (GHVDHGKT) is G1. A GTP-binding site is contributed by 475–482 (GHVDHGKT). The tract at residues 500 to 504 (GITQH) is G2. The G3 stretch occupies residues 521–524 (DTPG). GTP is bound by residues 521–525 (DTPGH) and 575–578 (NKID). Residues 575 to 578 (NKID) form a G4 region. The G5 stretch occupies residues 611–613 (SAK).

Belongs to the TRAFAC class translation factor GTPase superfamily. Classic translation factor GTPase family. IF-2 subfamily.

Its subcellular location is the cytoplasm. One of the essential components for the initiation of protein synthesis. Protects formylmethionyl-tRNA from spontaneous hydrolysis and promotes its binding to the 30S ribosomal subunits. Also involved in the hydrolysis of GTP during the formation of the 70S ribosomal complex. This is Translation initiation factor IF-2 from Cupriavidus pinatubonensis (strain JMP 134 / LMG 1197) (Cupriavidus necator (strain JMP 134)).